Consider the following 337-residue polypeptide: Quinolinate synthase (337 aa).

Residues H38 and S59 each coordinate iminosuccinate. C104 contributes to the [4Fe-4S] cluster binding site. Residues 130–132 (YAN) and S147 each bind iminosuccinate. C191 contributes to the [4Fe-4S] cluster binding site. Iminosuccinate-binding positions include 217-219 (HPE) and T234. Residue C288 participates in [4Fe-4S] cluster binding.

This sequence belongs to the quinolinate synthase family. Type 1 subfamily. [4Fe-4S] cluster serves as cofactor.

It localises to the cytoplasm. The catalysed reaction is iminosuccinate + dihydroxyacetone phosphate = quinolinate + phosphate + 2 H2O + H(+). It participates in cofactor biosynthesis; NAD(+) biosynthesis; quinolinate from iminoaspartate: step 1/1. In terms of biological role, catalyzes the condensation of iminoaspartate with dihydroxyacetone phosphate to form quinolinate. This is Quinolinate synthase from Wigglesworthia glossinidia brevipalpis.